Consider the following 1850-residue polypeptide: Chitin synthase V (1850 aa).

The tract at residues methionine 1–histidine 27 is disordered. The Myosin motor domain maps to methionine 1 to alanine 779. Residue glycine 105–serine 112 participates in ATP binding. 5 N-linked (GlcNAc...) asparagine glycosylation sites follow: asparagine 245, asparagine 290, asparagine 427, asparagine 481, and asparagine 558. A disordered region spans residues asparagine 289–serine 309. The interval serine 593–glycine 647 is disordered. Positions glutamate 620–histidine 630 are enriched in polar residues. An actin-binding region spans residues leucine 656–aspartate 680. Helical transmembrane passes span tryptophan 884–glycine 904 and methionine 923–isoleucine 943. Residues glutamine 947–phenylalanine 1006 enclose the Cytochrome b5 heme-binding domain. Asparagine 1033, asparagine 1058, and asparagine 1186 each carry an N-linked (GlcNAc...) asparagine glycan. The chain crosses the membrane as a helical span at residues leucine 1196 to leucine 1216. 2 N-linked (GlcNAc...) asparagine glycosylation sites follow: asparagine 1453 and asparagine 1559. 4 helical membrane passes run leucine 1568 to isoleucine 1588, leucine 1590 to valine 1610, valine 1617 to isoleucine 1637, and methionine 1644 to leucine 1664. Asparagine 1767 is a glycosylation site (N-linked (GlcNAc...) asparagine). The DEK-C domain maps to leucine 1800 to lysine 1850.

In the N-terminal section; belongs to the TRAFAC class myosin-kinesin ATPase superfamily. Myosin family. It in the C-terminal section; belongs to the chitin synthase family. Class V subfamily. In terms of tissue distribution, expressed in conidia and during appressorium formation.

It localises to the cell membrane. Its subcellular location is the cell septum. The protein resides in the cell tip. The catalysed reaction is [(1-&gt;4)-N-acetyl-beta-D-glucosaminyl](n) + UDP-N-acetyl-alpha-D-glucosamine = [(1-&gt;4)-N-acetyl-beta-D-glucosaminyl](n+1) + UDP + H(+). In terms of biological role, polymerizes chitin, a structural polymer of the cell wall and septum, by transferring the sugar moiety of UDP-GlcNAc to the non-reducing end of the growing chitin polymer. Contributes to the production of conidia and the ability of fungal conidia to germinate. Involved in the fungal cell wall integrity and the ability of conidia to withstand biophysical pressure. Required for appressorium formation and evasion of insect cellular and/or humoral defenses, promoting the fungal dimorphic transition to the production of hyphal bodies that occurs within hosts, and ultimately to virulence. The sequence is that of Chitin synthase V from Metarhizium acridum (strain CQMa 102).